Consider the following 316-residue polypeptide: N-acetyl-gamma-glutamyl-phosphate reductase (316 aa).

C136 is a catalytic residue.

Belongs to the NAGSA dehydrogenase family. Type 1 subfamily.

The protein localises to the cytoplasm. It carries out the reaction N-acetyl-L-glutamate 5-semialdehyde + phosphate + NADP(+) = N-acetyl-L-glutamyl 5-phosphate + NADPH + H(+). It functions in the pathway amino-acid biosynthesis; L-arginine biosynthesis; N(2)-acetyl-L-ornithine from L-glutamate: step 3/4. In terms of biological role, catalyzes the NADPH-dependent reduction of N-acetyl-5-glutamyl phosphate to yield N-acetyl-L-glutamate 5-semialdehyde. This chain is N-acetyl-gamma-glutamyl-phosphate reductase, found in Xanthomonas campestris pv. campestris (strain B100).